Here is a 413-residue protein sequence, read N- to C-terminus: Ribosomal RNA large subunit methyltransferase G (413 aa).

The interval 389-413 is disordered; that stretch reads EAEVEQAFDTETPHPQSALYGKPKA.

This sequence belongs to the methyltransferase superfamily. RlmG family.

It is found in the cytoplasm. It carries out the reaction guanosine(1835) in 23S rRNA + S-adenosyl-L-methionine = N(2)-methylguanosine(1835) in 23S rRNA + S-adenosyl-L-homocysteine + H(+). Functionally, specifically methylates the guanine in position 1835 (m2G1835) of 23S rRNA. The sequence is that of Ribosomal RNA large subunit methyltransferase G from Shewanella pealeana (strain ATCC 700345 / ANG-SQ1).